Reading from the N-terminus, the 155-residue chain is Transcriptional repressor NrdR (155 aa).

A zinc finger lies at 3–34 (CPFCQHDDTQVLDTRVSEEGDSIRRRRRCTSC). One can recognise an ATP-cone domain in the interval 49 to 139 (PVVVKKNGSR…VYKSFEDVAE (91 aa)).

It belongs to the NrdR family. Zn(2+) serves as cofactor.

Functionally, negatively regulates transcription of bacterial ribonucleotide reductase nrd genes and operons by binding to NrdR-boxes. This is Transcriptional repressor NrdR from Janthinobacterium sp. (strain Marseille) (Minibacterium massiliensis).